The sequence spans 422 residues: L-cysteine:1D-myo-inositol 2-amino-2-deoxy-alpha-D-glucopyranoside ligase (422 aa).

Residues 1–34 form a disordered region; sequence MKSWSTPAPPTVPSRPDRLRLHDTATGRTRHPGN. A compositionally biased stretch (basic and acidic residues) spans 15-25; sequence RPDRLRLHDTA. Position 44 (C44) interacts with Zn(2+). L-cysteinyl-5'-AMP contacts are provided by residues 44–47, T59, and 82–84; these read CGIT and NVT. Positions 46-56 match the 'HIGH' region motif; the sequence is ITPYDATHLGH. The short motif at 196–201 is the 'ERGGDP' region element; that stretch reads ERGGDP. W237 contributes to the L-cysteinyl-5'-AMP binding site. C241 serves as a coordination point for Zn(2+). Residue 259-261 participates in L-cysteinyl-5'-AMP binding; sequence GSD. Position 266 (H266) interacts with Zn(2+). L-cysteinyl-5'-AMP is bound at residue V292. A 'KMSKS' region motif is present at residues 298 to 302; it reads KMSKS.

It belongs to the class-I aminoacyl-tRNA synthetase family. MshC subfamily. In terms of assembly, monomer. Zn(2+) is required as a cofactor.

The enzyme catalyses 1D-myo-inositol 2-amino-2-deoxy-alpha-D-glucopyranoside + L-cysteine + ATP = 1D-myo-inositol 2-(L-cysteinylamino)-2-deoxy-alpha-D-glucopyranoside + AMP + diphosphate + H(+). Catalyzes the ATP-dependent condensation of GlcN-Ins and L-cysteine to form L-Cys-GlcN-Ins. In Micrococcus luteus (strain ATCC 4698 / DSM 20030 / JCM 1464 / CCM 169 / CCUG 5858 / IAM 1056 / NBRC 3333 / NCIMB 9278 / NCTC 2665 / VKM Ac-2230) (Micrococcus lysodeikticus), this protein is L-cysteine:1D-myo-inositol 2-amino-2-deoxy-alpha-D-glucopyranoside ligase.